Reading from the N-terminus, the 852-residue chain is MSSVSPIQIPSRLPLLLTHESVLLPGSTMRTSVDTARNLQLVRSRLLKGTSLQSTILGVIPNTPDPASDTQDLPPLHRIGTAALAVQVVGSNWPKPHYTLLITGLCRFQIVQVLKEKPYPVAEVEQLDRLEEFPNICKSREELGELSEQFYRYAVQLVEMLDMSVPAVAKLRRLLDNLPREALPDILTSIIRTSNKEKLQILDAVSLEDRFKMTIPLLVRQIEGLKLLQKTRKPKQDDDKRVIAIRPIRRIPHIPGTLEDEEEEEDNDDIVMLEKKIRTSSMPEQAHKVCVKEIKRLKKMPQSMPEYALTRNYLELMVELPWNKSTTDRLDIRAARILLDNDHYAMEKLKRRVLEYLAVRQLKNNLKGPILCFVGPPGVGKTSVGRSVAKTLGREFHRIALGGVCDQSDIRGHRRTYVGSMPGRIINGLKTVGVNNPVFLLDEVDKLGKSLQGDPAAALLEVLDPEQNHNFTDHYLNVAFDLSQVLFIATANTTATIPPALLDRMEIIQVPGYTQEEKIEIAHRHLIPKQLEQHGLTPQQIQIPQHTTLAIITRYTREAGVRSLDRKFGAICRAVAVKVAEGQHKEAKLDRSDVADGEGCKEHVLEDAKPESISDTADLALPPEMPILIDSHALKDILGPPLYELEVSERLSQPGVAIGLAWTPLGGKIMFVEASRMDGEGQLTLTGQLGDVMKESAHLAISWLRSNAKKYHLTNAFGSFDLLDNTDIHLHFPAGAVTKDGPSAGVTIVTCLASLFSGRLVRSDVAMTGEITLRGLVLPVGGIKDKVLAAHRAGLKQIIIPQRNEKDLEEIPSNVRQDLSFVTASCLDEVLNAAFDGGFPVKTRPGLIDSKL.

Ser-2 carries the N-acetylserine modification. In terms of domain architecture, Lon N-terminal spans 13-222 (LPLLLTHESV…MTIPLLVRQI (210 aa)). 375–382 (GPPGVGKT) contacts ATP. Positions 651-837 (LSQPGVAIGL…DEVLNAAFDG (187 aa)) constitute a Lon proteolytic domain. Active-site residues include Ser-743 and Lys-786. The Microbody targeting signal motif lies at 850–852 (SKL).

The protein belongs to the peptidase S16 family. As to quaternary structure, interacts with PEX5. Interacts with TYSND1. May interact with enzymes involved in beta-oxidation of fatty acids, including ACOX1/AOX.

Its subcellular location is the peroxisome matrix. It carries out the reaction Hydrolysis of proteins in presence of ATP.. In terms of biological role, ATP-dependent serine protease that mediates the selective degradation of misfolded and unassembled polypeptides in the peroxisomal matrix. Necessary for type 2 peroxisome targeting signal (PTS2)-containing protein processing and facilitates peroxisome matrix protein import. May indirectly regulate peroxisomal fatty acid beta-oxidation through degradation of the self-processed forms of TYSND1. The polypeptide is Lon protease homolog 2, peroxisomal (Lonp2) (Mus musculus (Mouse)).